The chain runs to 119 residues: Ribonuclease P protein component (119 aa).

This sequence belongs to the RnpA family. Consists of a catalytic RNA component (M1 or rnpB) and a protein subunit.

The enzyme catalyses Endonucleolytic cleavage of RNA, removing 5'-extranucleotides from tRNA precursor.. Functionally, RNaseP catalyzes the removal of the 5'-leader sequence from pre-tRNA to produce the mature 5'-terminus. It can also cleave other RNA substrates such as 4.5S RNA. The protein component plays an auxiliary but essential role in vivo by binding to the 5'-leader sequence and broadening the substrate specificity of the ribozyme. The sequence is that of Ribonuclease P protein component from Borreliella burgdorferi (strain ZS7) (Borrelia burgdorferi).